Here is a 910-residue protein sequence, read N- to C-terminus: DNA mismatch repair protein MutS (910 aa).

A compositionally biased stretch (basic and acidic residues) spans 1–11 (MEAKVEEKEPE). Residues 1-21 (MEAKVEEKEPEPVENAGPDAP) form a disordered region. Position 658–665 (658–665 (GPNMGGKS)) interacts with ATP.

It belongs to the DNA mismatch repair MutS family.

This protein is involved in the repair of mismatches in DNA. It is possible that it carries out the mismatch recognition step. This protein has a weak ATPase activity. In Brucella abortus (strain 2308), this protein is DNA mismatch repair protein MutS.